Consider the following 349-residue polypeptide: MAELLAIKWDDNRDKLILLDQTILPNKIEYIEYDTAEGVYDSIKDMIVRGAPAIGVTAAYGLYFAAKVAPEDNFENFFKYLKEKSSYLDSSRPTAVNLSWALKVMESKALENKDKDVKEIKSILREEAKRIHEEDIEICKTIGENLITLLKDGMGILTHCNAGQLATSKYGTATSPMYLAKEKGWNFKVYSDETRPRLQGSTLTALELYEAGIDVTTITDNMAAMVMSQGKIDAVIVGCDRVAANGDTANKIGTMGVSILAKYFGIPMYIAAPTPSIDINTKTGEDIPIEERNPEEVTSRFGAWTAPKGVKVYNPGFDVTPHENITAIVTEKGIVYPPFKENLKKLFEK.

Substrate-binding positions include 49 to 51, Arg92, and Gln199; that span reads RGA. Asp240 acts as the Proton donor in catalysis. 250 to 251 contributes to the substrate binding site; sequence NK.

The protein belongs to the EIF-2B alpha/beta/delta subunits family. DrdI subfamily.

The catalysed reaction is 5-deoxy-alpha-D-ribose 1-phosphate = 5-deoxy-D-ribulose 1-phosphate. It functions in the pathway carbohydrate degradation. Catalyzes the isomerization of 5-deoxy-alpha-D-ribose 1-phosphate to 5-deoxy-D-ribulose 1-phosphate, as part of a 5-deoxyribose salvage pathway that recycles this toxic radical SAM enzyme by-product to mainstream metabolites. The chain is 5-deoxyribose 1-phosphate isomerase from Clostridium botulinum (strain Okra / Type B1).